Here is an 836-residue protein sequence, read N- to C-terminus: Enhancer of polycomb homolog 1 (836 aa).

K319 participates in a covalent cross-link: Glycyl lysine isopeptide (Lys-Gly) (interchain with G-Cter in SUMO2). 2 disordered regions span residues 335–360 and 372–401; these read KRKY…SPAA and YDFP…PDGP. Positions 346–360 are enriched in low complexity; sequence PSSAAATPQQTSPAA. The residue at position 539 (S539) is a Phosphoserine. K673 is covalently cross-linked (Glycyl lysine isopeptide (Lys-Gly) (interchain with G-Cter in SUMO2)). The interval 802-829 is disordered; it reads VPSSSSVDSVPRENHESEKPALNNIADN. Residues 811-820 show a composition bias toward basic and acidic residues; the sequence is VPRENHESEK.

Belongs to the enhancer of polycomb family. In terms of assembly, component of the NuA4 histone acetyltransferase complex which contains the catalytic subunit KAT5/TIP60 and the subunits EP400, TRRAP/PAF400, BRD8/SMAP, EPC1, DMAP1/DNMAP1, RUVBL1/TIP49, RUVBL2, ING3, actin, ACTL6A/BAF53A, MORF4L1/MRG15, MORF4L2/MRGX, MRGBP, YEATS4/GAS41, VPS72/YL1 and MEAF6. KAT5/TIP60, EPC1, and ING3 together constitute a minimal HAT complex termed Piccolo NuA4. Component of a NuA4-related complex which contains EP400, TRRAP/PAF400, SRCAP, BRD8/SMAP, EPC1, DMAP1/DNMAP1, RUVBL1/TIP49, RUVBL2, actin, ACTL6A/BAF53A, VPS72 and YEATS4/GAS41. Interacts with TRIM27. Interacts with MBTD1; interaction is direct and promotes recruitment of MBTD1 into the NuA4 histone acetyltransferase complex.

The protein resides in the nucleus. It localises to the cytoplasm. In terms of biological role, component of the NuA4 histone acetyltransferase (HAT) complex, a multiprotein complex involved in transcriptional activation of select genes principally by acetylation of nucleosomal histones H4 and H2A. The NuA4 complex plays a direct role in repair of DNA double-strand breaks (DSBs) by promoting homologous recombination (HR). The NuA4 complex is also required for spermatid development by promoting acetylation of histones: histone acetylation is required for histone replacement during the transition from round to elongating spermatids. In the NuA4 complex, EPC1 is required to recruit MBTD1 into the complex. This chain is Enhancer of polycomb homolog 1, found in Homo sapiens (Human).